The sequence spans 1033 residues: Phospholipid-transporting ATPase neo1 (1033 aa).

Transmembrane regions (helical) follow at residues 133–153 (LKIG…LITL), 274–294 (TLWA…VYTG), 317–337 (INFY…GLTF), and 344–364 (DWYI…PINL). The active-site 4-aspartylphosphate intermediate is the Asp-408. Positions 408, 409, 410, 491, 528, 530, 533, 551, 580, 581, 662, 663, 664, 744, and 750 each coordinate ATP. Asp-408 contacts Mg(2+). Thr-410 lines the Mg(2+) pocket. The next 6 helical transmembrane spans lie at 768–788 (IGDG…IGIV), 843–863 (VVYS…LLLV), 913–933 (VLIS…LIGF), 939–959 (MLAV…ALQI), 965–985 (TIVM…PFLT), and 992–1012 (FLLG…SLLP). Residue Asp-770 coordinates Mg(2+). 2 residues coordinate ATP: Asn-773 and Asp-774. Asp-774 contacts Mg(2+).

Belongs to the cation transport ATPase (P-type) (TC 3.A.3) family. Type IV subfamily. As to quaternary structure, functions without a CDC50/LEM3 family accessory subunit. Mg(2+) serves as cofactor.

The protein localises to the endosome membrane. Its subcellular location is the golgi apparatus membrane. It carries out the reaction ATP + H2O + phospholipidSide 1 = ADP + phosphate + phospholipidSide 2.. It catalyses the reaction a 1,2-diacyl-sn-glycero-3-phospho-L-serine(out) + ATP + H2O = a 1,2-diacyl-sn-glycero-3-phospho-L-serine(in) + ADP + phosphate + H(+). The catalysed reaction is a 1,2-diacyl-sn-glycero-3-phosphoethanolamine(out) + ATP + H2O = a 1,2-diacyl-sn-glycero-3-phosphoethanolamine(in) + ADP + phosphate + H(+). Its function is as follows. Flippase that catalyzes the hydrolysis of ATP coupled to the transport of lysophosphatidylserine, phosphatidylethanolamine, and phosphatidylserine from the lumenal to the cytosolic leaflet of the Golgi apparatus membrane and ensures the maintenance of asymmetric distribution of phospholipids. The chain is Phospholipid-transporting ATPase neo1 from Schizosaccharomyces pombe (strain 972 / ATCC 24843) (Fission yeast).